The chain runs to 37 residues: Large ribosomal subunit protein bL36c (37 aa).

This sequence belongs to the bacterial ribosomal protein bL36 family.

It is found in the plastid. The protein resides in the chloroplast. This Chara vulgaris (Common stonewort) protein is Large ribosomal subunit protein bL36c.